Reading from the N-terminus, the 308-residue chain is Pseudouridine-5'-phosphate glycosidase (308 aa).

Glutamate 25 (proton donor) is an active-site residue. Positions 86 and 106 each coordinate substrate. Residue aspartate 142 coordinates Mn(2+). 144–146 (SAD) serves as a coordination point for substrate. Lysine 163 serves as the catalytic Nucleophile.

The protein belongs to the pseudouridine-5'-phosphate glycosidase family. Homotrimer. It depends on Mn(2+) as a cofactor.

It catalyses the reaction D-ribose 5-phosphate + uracil = psi-UMP + H2O. In terms of biological role, catalyzes the reversible cleavage of pseudouridine 5'-phosphate (PsiMP) to ribose 5-phosphate and uracil. Functions biologically in the cleavage direction, as part of a pseudouridine degradation pathway. The sequence is that of Pseudouridine-5'-phosphate glycosidase from Symbiobacterium thermophilum (strain DSM 24528 / JCM 14929 / IAM 14863 / T).